Consider the following 181-residue polypeptide: Translationally-controlled tumor protein homolog (181 aa).

Residues 1-181 form the TCTP domain; it reads MLIFKDAFTD…VKEALIEEKQ (181 aa).

It belongs to the TCTP family.

It localises to the cytoplasm. In terms of biological role, involved in calcium binding and microtubule stabilization. The chain is Translationally-controlled tumor protein homolog from Brugia malayi (Filarial nematode worm).